Consider the following 531-residue polypeptide: Zinc finger C2HC domain-containing protein 1C (531 aa).

Residues 16–45 (MLPHNTTEAPGPHSAKQDSYEQSDSSQQSL) are disordered. Over residues 35 to 44 (YEQSDSSQQS) the composition is skewed to low complexity. Residues 209–264 (VQIRRLEAAGESLEEEIRRKQILLRGKLKKTEEELRRIQTQKEQAKENENRELQKI) are a coiled coil. 2 disordered regions span residues 290-318 (FEEEFSRDKREDETWERSQQNSSPFQLSD) and 334-387 (NKIR…PQLG). The segment covering 293-305 (EFSRDKREDETWE) has biased composition (basic and acidic residues). Residues 306 to 315 (RSQQNSSPFQ) show a composition bias toward polar residues. Basic and acidic residues predominate over residues 335-345 (KIRDRVSEPSM). The span at 366–380 (SSLSMAPDSSGSSGS) shows a compositional bias: low complexity. C2HC/C3H-type zinc fingers lie at residues 385 to 414 (QLGECSHCGRKFLLFRLERHSNICSRMQGS) and 493 to 522 (DYIQCPHCSHHFAPKVAEQHIPKCKTIKNR). Residues Cys-389, Cys-392, His-404, Cys-408, Cys-497, Cys-500, His-512, and Cys-516 each contribute to the Zn(2+) site.

It belongs to the ZC2HC1 family. Requires Zn(2+) as cofactor.

The protein is Zinc finger C2HC domain-containing protein 1C (ZC2HC1C) of Macaca fascicularis (Crab-eating macaque).